The chain runs to 116 residues: Protein Rev (116 aa).

Phosphoserine; by host CK2 is present on residues S5 and S8. A homomultimerization region spans residues 18–26 (IIKHLYQSN). Residues 20 to 48 (KHLYQSNPPPKPEGTRQARRNRRRRWRER) form a disordered region. The Nuclear localization signal and RNA-binding (RRE) signature appears at 34 to 50 (TRQARRNRRRRWRERQR). A compositionally biased stretch (basic residues) spans 36–48 (QARRNRRRRWRER). The Nuclear export signal and binding to XPO1 motif lies at 73–84 (LQLPPLERLTLD). Residues 91–116 (TSGTQGVGSPQILVESPAVLESGTKE) form a disordered region. Phosphoserine; by host is present on residues S92 and S99.

The protein belongs to the HIV-1 REV protein family. As to quaternary structure, homomultimer; when bound to the RRE. Multimeric assembly is essential for activity and may involve XPO1. Binds to human KPNB1, XPO1, TNPO1, RANBP5 and IPO7. Interacts with the viral Integrase. Interacts with human KHDRBS1. Interacts with human NAP1; this interaction decreases Rev multimerization and stimulates its activity. Interacts with human DEAD-box helicases DDX3 and DDX24; these interactions may serve for viral RNA export to the cytoplasm and packaging, respectively. Interacts with human PSIP1; this interaction may inhibit HIV-1 DNA integration by promoting dissociation of the Integrase-LEDGF/p75 complex. Asymmetrically arginine dimethylated at one site by host PRMT6. Methylation impairs the RNA-binding activity and export of viral RNA from the nucleus to the cytoplasm. In terms of processing, phosphorylated by protein kinase CK2. Presence of, and maybe binding to the N-terminus of the regulatory beta subunit of CK2 is necessary for CK2-mediated Rev's phosphorylation.

The protein localises to the host nucleus. It is found in the host nucleolus. The protein resides in the host cytoplasm. In terms of biological role, escorts unspliced or incompletely spliced viral pre-mRNAs (late transcripts) out of the nucleus of infected cells. These pre-mRNAs carry a recognition sequence called Rev responsive element (RRE) located in the env gene, that is not present in fully spliced viral mRNAs (early transcripts). This function is essential since most viral proteins are translated from unspliced or partially spliced pre-mRNAs which cannot exit the nucleus by the pathway used by fully processed cellular mRNAs. Rev itself is translated from a fully spliced mRNA that readily exits the nucleus. Rev's nuclear localization signal (NLS) binds directly to KPNB1/Importin beta-1 without previous binding to KPNA1/Importin alpha-1. KPNB1 binds to the GDP bound form of RAN (Ran-GDP) and targets Rev to the nucleus. In the nucleus, the conversion from Ran-GDP to Ran-GTP dissociates Rev from KPNB1 and allows Rev's binding to the RRE in viral pre-mRNAs. Rev multimerization on the RRE via cooperative assembly exposes its nuclear export signal (NES) to the surface. Rev can then form a complex with XPO1/CRM1 and Ran-GTP, leading to nuclear export of the complex. Conversion from Ran-GTP to Ran-GDP mediates dissociation of the Rev/RRE/XPO1/RAN complex, so that Rev can return to the nucleus for a subsequent round of export. Beside KPNB1, also seems to interact with TNPO1/Transportin-1, RANBP5/IPO5 and IPO7/RANBP7 for nuclear import. The nucleoporin-like HRB/RIP is an essential cofactor that probably indirectly interacts with Rev to release HIV RNAs from the perinuclear region to the cytoplasm. This is Protein Rev from Human immunodeficiency virus type 1 group M subtype B (isolate CDC-451) (HIV-1).